Here is a 334-residue protein sequence, read N- to C-terminus: MKKNQFLKESDVTAESVFFMKRRQVLKALGISAAALSLPHAAHADLLSWFKGNDRPPAPAGKPLEFSKPTAWQNNLPLTPVDKVSGYNNFYEFGLDKADPAANAGSLKTDPWTLKISGEVAKPLTLDHDDLTRRFPLEERIYRMRCVEAWSMVVPWIGFPLHKLLALAEPTSNAKYVAFETIYAPEQMPGQQDRFIGGGLKYPYVEGLRLDEAMHPLTLMTVGVYGKALPPQNGAPVRLIVPWKYGFKGIKSIVSIKLTRERPPTTWNLAAPDEYGFYANVNPHVDHPRWSQATERFIGSGGILDVQRQPTLLFNGYADQVASLYRGLDLRENF.

Positions 1–44 (MKKNQFLKESDVTAESVFFMKRRQVLKALGISAAALSLPHAAHA) form a signal peptide, tat-type signal. Mo-molybdopterin-binding positions include asparagine 88, 91 to 92 (YE), cysteine 146, threonine 181, asparagine 233, arginine 238, and 249 to 251 (GIK).

The protein belongs to the MsrP family. In terms of assembly, heterodimer of a catalytic subunit (MsrP) and a heme-binding subunit (MsrQ). Mo-molybdopterin is required as a cofactor. Post-translationally, predicted to be exported by the Tat system. The position of the signal peptide cleavage has not been experimentally proven.

The protein resides in the periplasm. It carries out the reaction L-methionyl-[protein] + a quinone + H2O = L-methionyl-(S)-S-oxide-[protein] + a quinol. The enzyme catalyses L-methionyl-[protein] + a quinone + H2O = L-methionyl-(R)-S-oxide-[protein] + a quinol. Its function is as follows. Part of the MsrPQ system that repairs oxidized periplasmic proteins containing methionine sulfoxide residues (Met-O), using respiratory chain electrons. Thus protects these proteins from oxidative-stress damage caused by reactive species of oxygen and chlorine generated by the host defense mechanisms. MsrPQ is essential for the maintenance of envelope integrity under bleach stress, rescuing a wide series of structurally unrelated periplasmic proteins from methionine oxidation, including the primary periplasmic chaperone SurA and the lipoprotein Pal. The catalytic subunit MsrP is non-stereospecific, being able to reduce both (R-) and (S-) diastereoisomers of methionine sulfoxide. In Shigella sonnei (strain Ss046), this protein is Protein-methionine-sulfoxide reductase catalytic subunit MsrP.